Reading from the N-terminus, the 329-residue chain is MVKTQRVVITPGEPAGIGPDLVVQLAQREWPVELVVCADATLLTDRAAMLGLPLTLRPYSPNSPAQPQTAGTLTLLPVALRESVTAGQLAIENGHYVVETLARACDGCLNGEFAALITGPVHKGVINDAGIPFTGHTEFFEERSQAKKVVMMLATEELRVALATTHLPLRDIADAITPALLHEVIAILHHDLRTKFGIAEPRILVCGLNPHAGEGGHMGTEEIDTIIPVLDELRAQGMKLNGPLPADTLFQPKYLDNADAVLAMYHDQGLPVLKYQGFGRGVNITLGLPFIRTSVDHGTALELAGRGEADVGSFITALNLAIKMIVNTQ.

H136 and T137 together coordinate substrate. Residues H166, H211, and H266 each contribute to the a divalent metal cation site. Substrate is bound by residues K274, N283, and R292.

This sequence belongs to the PdxA family. As to quaternary structure, homodimer. Zn(2+) is required as a cofactor. Requires Mg(2+) as cofactor. It depends on Co(2+) as a cofactor.

The protein resides in the cytoplasm. It catalyses the reaction 4-(phosphooxy)-L-threonine + NAD(+) = 3-amino-2-oxopropyl phosphate + CO2 + NADH. The protein operates within cofactor biosynthesis; pyridoxine 5'-phosphate biosynthesis; pyridoxine 5'-phosphate from D-erythrose 4-phosphate: step 4/5. Catalyzes the NAD(P)-dependent oxidation of 4-(phosphooxy)-L-threonine (HTP) into 2-amino-3-oxo-4-(phosphooxy)butyric acid which spontaneously decarboxylates to form 3-amino-2-oxopropyl phosphate (AHAP). The sequence is that of 4-hydroxythreonine-4-phosphate dehydrogenase from Shigella boydii serotype 18 (strain CDC 3083-94 / BS512).